Consider the following 777-residue polypeptide: Subtilisin-like protease SBT1.4 (777 aa).

The signal sequence occupies residues methionine 1–serine 25. Residues serine 26–histidine 110 constitute a propeptide, activation peptide. The 79-residue stretch at serine 32–histidine 110 folds into the Inhibitor I9 domain. Residues proline 115–leucine 614 form the Peptidase S8 domain. Aspartate 142 acts as the Charge relay system in catalysis. The N-linked (GlcNAc...) asparagine glycan is linked to asparagine 198. Positions glycine 199 to serine 223 are disordered. Basic and acidic residues predominate over residues alanine 205–glycine 218. Catalysis depends on histidine 217, which acts as the Charge relay system. Asparagine 232 and asparagine 395 each carry an N-linked (GlcNAc...) asparagine glycan. One can recognise a PA domain in the interval leucine 376 to arginine 461. The active-site Charge relay system is the serine 546.

It belongs to the peptidase S8 family.

The protein resides in the secreted. The protein is Subtilisin-like protease SBT1.4 of Arabidopsis thaliana (Mouse-ear cress).